Here is a 463-residue protein sequence, read N- to C-terminus: 23S rRNA (uracil(1939)-C(5))-methyltransferase RlmD (463 aa).

A TRAM domain is found at Ala-14–Glu-78. [4Fe-4S] cluster contacts are provided by Cys-91, Cys-97, Cys-100, and Cys-179. S-adenosyl-L-methionine is bound by residues Gln-287, Phe-316, Asn-321, Glu-337, Asn-365, and Asp-386. The active-site Nucleophile is Cys-419.

The protein belongs to the class I-like SAM-binding methyltransferase superfamily. RNA M5U methyltransferase family. RlmD subfamily.

The enzyme catalyses uridine(1939) in 23S rRNA + S-adenosyl-L-methionine = 5-methyluridine(1939) in 23S rRNA + S-adenosyl-L-homocysteine + H(+). Functionally, catalyzes the formation of 5-methyl-uridine at position 1939 (m5U1939) in 23S rRNA. The sequence is that of 23S rRNA (uracil(1939)-C(5))-methyltransferase RlmD from Cupriavidus pinatubonensis (strain JMP 134 / LMG 1197) (Cupriavidus necator (strain JMP 134)).